A 1064-amino-acid chain; its full sequence is MPHLPLASFRPPFWGLRHSRGLPRFHSVSTQSEPHGSPISRRNREAKQKRLREKQATLETDIAGESKSPAESIKAWSPKEVVLYEIPTKPGEKKDVSGPLPPAYSPRYVEAAWYPWWVREGFFKPEYQARLPQATGETFSMCIPPPNVTGSLHIGHALTVAIQDALVRWHRMRGDQVLWVPGSDHAGIATQAVVEKQLWKEQGVRRHELSREAFLREVWQWKEAKGGEICEQLRALGASLDWDRECFTMDVGSSVAVTEAFVRLYKAGLLYRNRRLGRWMSCPLTQLSRRFQVENRPLPGRTQLRLPGCPTPVSFGLLFSVAFPVDGEPDAEVVVGTTRPETLPGDVAVAVHPDDSRYTHLHGRQLRHPLMGQPLPLITDYAVQPHVGTGAVKVTPAHSPADAEMGARHGLSPLNVIAEDGTMTSLCGDWLQGLHRFVAREKIVSVLSERGLFRGLQNHPMVLPICSRSGDVIEYLLKSQWFVRCQEMGARAAQAVESGALELSPSFHQKNWQHWFSHIGDWCVSRQLWWGHQIPAYLVVEDHAQGEEDCWVVGRSEAEAREVAAELTGRPGAELALERDPDVLDTWFSSALFPFSALGWPQETPDLARFYPLSLLETGSDLLLFWVGRMVMLGTQLTGRLPFSKVLLHPMVRDRQGRKMSKSLGNVLDPRHIISGAEMQVLQEKLRSGNLDPAELAIVAAAQKKDFPHGIPECGTDALRFTLCSHGVQGGDLCLSVSEVQSCRHFCNKIWNALRFILNALGEKFVPQPAKELSPSCHMDAWILSRLALTARECERGFLTRELSLVTHALHHFWLHNLCDVYLEAVKPVLRHSPCPPGPPQVLFSCADIGLRLLAPLMPFLAEELWQRLPPRPGCPPAPSISVAPYPSPCSLEHWRQPELERRFSRVQEVVQVLRALRATYQLTKARPRVLLQSSEPGDQGLFEAFLEPLGTLSHCGAVGLLPPGAAAPSGWAQAPLSDTVQVYMELQGLVDPQIQLPLLAARRSKLQKQLDGLMARTPSEGEAGTQRQQRLSSLQLELSKLDKAASHLRQLMDEPPAPGSPEL.

Residues 1-26 (MPHLPLASFRPPFWGLRHSRGLPRFH) constitute a mitochondrion transit peptide. The disordered stretch occupies residues 25–65 (FHSVSTQSEPHGSPISRRNREAKQKRLREKQATLETDIAGE). The segment covering 42–56 (RNREAKQKRLREKQA) has biased composition (basic and acidic residues). The 'HIGH' region motif lies at 146 to 156 (PNVTGSLHIGH). The 'KMSKS' region motif lies at 659–663 (KMSKS). K662 serves as a coordination point for ATP.

Belongs to the class-I aminoacyl-tRNA synthetase family.

The protein resides in the mitochondrion. The catalysed reaction is tRNA(Val) + L-valine + ATP = L-valyl-tRNA(Val) + AMP + diphosphate. Catalyzes the attachment of valine to tRNA(Val) in a two-step reaction: valine is first activated by ATP to form Val-AMP and then transferred to the acceptor end of tRNA(Val). The polypeptide is Valine--tRNA ligase, mitochondrial (VARS2) (Macaca mulatta (Rhesus macaque)).